The sequence spans 384 residues: Histidinol-phosphate aminotransferase 1 (384 aa).

K233 is modified (N6-(pyridoxal phosphate)lysine).

It belongs to the class-II pyridoxal-phosphate-dependent aminotransferase family. Histidinol-phosphate aminotransferase subfamily. As to quaternary structure, homodimer. Requires pyridoxal 5'-phosphate as cofactor.

The catalysed reaction is L-histidinol phosphate + 2-oxoglutarate = 3-(imidazol-4-yl)-2-oxopropyl phosphate + L-glutamate. The protein operates within amino-acid biosynthesis; L-histidine biosynthesis; L-histidine from 5-phospho-alpha-D-ribose 1-diphosphate: step 7/9. In Thiobacillus denitrificans (strain ATCC 25259 / T1), this protein is Histidinol-phosphate aminotransferase 1.